A 53-amino-acid polypeptide reads, in one-letter code: Rubredoxin 3 (53 aa).

Residues 1 to 53 (MQKWVCVPCGYEYDPADGDPENGIEPGTAFEDLPEDWVCPVCGVDKSFFEPVS) form the Rubredoxin-like domain. Positions 6, 9, 39, and 42 each coordinate Fe cation.

This sequence belongs to the rubredoxin family. Monomer. Requires Fe(3+) as cofactor.

In terms of biological role, functions as an electron acceptor for pyruvate ferredoxin oxidoreductase (PFOR). This is Rubredoxin 3 (rub3) from Chlorobaculum tepidum (strain ATCC 49652 / DSM 12025 / NBRC 103806 / TLS) (Chlorobium tepidum).